Reading from the N-terminus, the 154-residue chain is Myoglobin (154 aa).

Positions 2 to 148 (GLSDGEWHLV…FRNDIAAKIK (147 aa)) constitute a Globin domain. S4 carries the phosphoserine modification. Nitrite is bound at residue H65. Residue H65 coordinates O2. Position 68 is a phosphothreonine (T68). H94 contacts heme b.

It belongs to the globin family. As to quaternary structure, monomeric.

It is found in the cytoplasm. The protein resides in the sarcoplasm. It carries out the reaction Fe(III)-heme b-[protein] + nitric oxide + H2O = Fe(II)-heme b-[protein] + nitrite + 2 H(+). The catalysed reaction is H2O2 + AH2 = A + 2 H2O. Functionally, monomeric heme protein which primary function is to store oxygen and facilitate its diffusion within muscle tissues. Reversibly binds oxygen through a pentacoordinated heme iron and enables its timely and efficient release as needed during periods of heightened demand. Depending on the oxidative conditions of tissues and cells, and in addition to its ability to bind oxygen, it also has a nitrite reductase activity whereby it regulates the production of bioactive nitric oxide. Under stress conditions, like hypoxia and anoxia, it also protects cells against reactive oxygen species thanks to its pseudoperoxidase activity. The sequence is that of Myoglobin (MB) from Pusa sibirica (Baikal seal).